The sequence spans 549 residues: Glucose-6-phosphate isomerase (549 aa).

Lysine 80, lysine 228, and lysine 234 each carry N6-acetyllysine. The active-site Proton donor is the glutamate 355. Residues histidine 386 and lysine 514 contribute to the active site.

It belongs to the GPI family.

The protein resides in the cytoplasm. It catalyses the reaction alpha-D-glucose 6-phosphate = beta-D-fructose 6-phosphate. It functions in the pathway carbohydrate biosynthesis; gluconeogenesis. The protein operates within carbohydrate degradation; glycolysis; D-glyceraldehyde 3-phosphate and glycerone phosphate from D-glucose: step 2/4. In terms of biological role, catalyzes the reversible isomerization of glucose-6-phosphate to fructose-6-phosphate. The polypeptide is Glucose-6-phosphate isomerase (Escherichia coli (strain SE11)).